We begin with the raw amino-acid sequence, 625 residues long: MTNNMNNYPLLSLINSPEDLRLLNKDQLPQLCQELRAYLLESVSQTSGHLASGLGTVELTVALHYVYKTPFDQLIWDVGHQAYPHKILTGRREQMSTIRQKGGIHPFPWREESEFDVLSVGHSSTSISAGLGIAVAAERENASRKTVCVIGDGSITAGMAFEALNHAGALHTDMLVILNDNEMSISENVGALNNHLARIFSGSLYSTLRDGSKKILDKVPPIKNFMKKTEEHMKGVMFSPESTLFEELGFNYIGPVDGHNIDELVATLTNMRNLKGPQFLHIKTKKGKGYAPAEKDPIGFHGVPKFDPISGELPKNNSKPTYSKIFGDWLCEMAEKDAKIIGITPAMREGSGMVEFSQRFPKQYFDVAIAEQHAVTFATGLAIGGYKPVVAIYSTFLQRAYDQLIHDVAIQNLPVLFAIDRAGIVGADGATHQGAFDISFMRCIPNMIIMTPSDENECRQMLYTGYQCGKPAAVRYPRGNAVGVKLTPLEMLPIGKSRLIREGQKIAILNFGTLLPSALELSEKLNATVVDMRFVKPIDIEMINMLAQTHDYLVTLEENAIQGGAGSAVAEVLNSSGKSTALLQLGLPDYFIPQATQQEALADLGLDTKGIEEKILNFIAKQGNL.

Thiamine diphosphate-binding positions include His-80 and 121 to 123 (GHS). Asp-152 contacts Mg(2+). Thiamine diphosphate is bound by residues 153–154 (GS), Asn-181, Tyr-290, and Glu-371. Asn-181 contributes to the Mg(2+) binding site.

This sequence belongs to the transketolase family. DXPS subfamily. As to quaternary structure, homodimer. Requires Mg(2+) as cofactor. It depends on thiamine diphosphate as a cofactor.

It catalyses the reaction D-glyceraldehyde 3-phosphate + pyruvate + H(+) = 1-deoxy-D-xylulose 5-phosphate + CO2. Its pathway is metabolic intermediate biosynthesis; 1-deoxy-D-xylulose 5-phosphate biosynthesis; 1-deoxy-D-xylulose 5-phosphate from D-glyceraldehyde 3-phosphate and pyruvate: step 1/1. Functionally, catalyzes the acyloin condensation reaction between C atoms 2 and 3 of pyruvate and glyceraldehyde 3-phosphate to yield 1-deoxy-D-xylulose-5-phosphate (DXP). This chain is 1-deoxy-D-xylulose-5-phosphate synthase, found in Haemophilus influenzae (strain PittGG).